A 366-amino-acid polypeptide reads, in one-letter code: Aminomethyltransferase (366 aa).

The protein belongs to the GcvT family. As to quaternary structure, the glycine cleavage system is composed of four proteins: P, T, L and H.

The enzyme catalyses N(6)-[(R)-S(8)-aminomethyldihydrolipoyl]-L-lysyl-[protein] + (6S)-5,6,7,8-tetrahydrofolate = N(6)-[(R)-dihydrolipoyl]-L-lysyl-[protein] + (6R)-5,10-methylene-5,6,7,8-tetrahydrofolate + NH4(+). Its function is as follows. The glycine cleavage system catalyzes the degradation of glycine. The sequence is that of Aminomethyltransferase from Bordetella bronchiseptica (strain ATCC BAA-588 / NCTC 13252 / RB50) (Alcaligenes bronchisepticus).